The following is a 654-amino-acid chain: MAVIQQLDDALSNKIAAGEVVERPASIVKELVENAIDANSSQILVEIEEGGLSSIRIVDNGTGIEPNELELAFSRHATSKIKTDRDLFTICTLGFRGEALPSIASVSRVNMQTSTGSAGMQVELEGGKIVHKQPSEARKGTTIVVTDLFYNTPARLKYLKTVLTEAGHVSEVMNRMALAYPHIRFHYVSDGKTVLKTAGNGDLRQVIAQVYGRKTAEKMVPITGSSLDYELRGYIAKPELTRANRQYMSIFINGRYIRNFKLAKAIQQGFHTKLPIGRFPIAVLKLEMDPTLIDVNVHPAKLEVRLSKEEALSEMIAESIKKALSEETLIPEPKKENTAKTKSEQLSFSLAYELQPEKEHVRETMQQPRQLAADDQVDRKKESTSIGNSWSPSHQQEEEVEQGRGSNASIPPRNERVETNTEEKYEQADRRTDESLPMEMEEEAAVVEPQLPLGNDAEAKGAMPPLYPVGQMHGTYIVAQNEQGMYLIDQHAAQERIKYEHFHQKLAEPLGQTQELLVPITLELTTRETLVVTESKEKLEAVGVFLEEFGKNTFVVRSHPTWFPQGDEESTIREMVEQLLDNKRISIGELREEAAIMMSCKAAIKANRHLRTDEMFQLLETLRRCQEPYTCPHGRPVVIHFSTYELEKMFKRVM.

The tract at residues 358-437 is disordered; sequence KEHVRETMQQ…ADRRTDESLP (80 aa). Residues 384-394 are compositionally biased toward polar residues; the sequence is TSIGNSWSPSH. Basic and acidic residues predominate over residues 413–434; sequence RNERVETNTEEKYEQADRRTDE.

The protein belongs to the DNA mismatch repair MutL/HexB family.

Functionally, this protein is involved in the repair of mismatches in DNA. It is required for dam-dependent methyl-directed DNA mismatch repair. May act as a 'molecular matchmaker', a protein that promotes the formation of a stable complex between two or more DNA-binding proteins in an ATP-dependent manner without itself being part of a final effector complex. The polypeptide is DNA mismatch repair protein MutL (Shouchella clausii (strain KSM-K16) (Alkalihalobacillus clausii)).